A 189-amino-acid chain; its full sequence is Cancer/testis antigen family 45 member A10 (189 aa).

This sequence belongs to the CT45 family.

It localises to the nucleus. The sequence is that of Cancer/testis antigen family 45 member A10 from Homo sapiens (Human).